Consider the following 311-residue polypeptide: Acetyl-coenzyme A carboxylase carboxyl transferase subunit alpha (311 aa).

The 258-residue stretch at 32–289 (ELNLLEERLR…KSVLEQKLAQ (258 aa)) folds into the CoA carboxyltransferase C-terminal domain.

Belongs to the AccA family. Acetyl-CoA carboxylase is a heterohexamer composed of biotin carboxyl carrier protein (AccB), biotin carboxylase (AccC) and two subunits each of ACCase subunit alpha (AccA) and ACCase subunit beta (AccD).

Its subcellular location is the cytoplasm. It carries out the reaction N(6)-carboxybiotinyl-L-lysyl-[protein] + acetyl-CoA = N(6)-biotinyl-L-lysyl-[protein] + malonyl-CoA. It participates in lipid metabolism; malonyl-CoA biosynthesis; malonyl-CoA from acetyl-CoA: step 1/1. Component of the acetyl coenzyme A carboxylase (ACC) complex. First, biotin carboxylase catalyzes the carboxylation of biotin on its carrier protein (BCCP) and then the CO(2) group is transferred by the carboxyltransferase to acetyl-CoA to form malonyl-CoA. The polypeptide is Acetyl-coenzyme A carboxylase carboxyl transferase subunit alpha (Exiguobacterium sibiricum (strain DSM 17290 / CCUG 55495 / CIP 109462 / JCM 13490 / 255-15)).